The following is a 117-amino-acid chain: Resistin-like gamma (117 aa).

The first 29 residues, 1-29 (MLTFNKMKTTTCSLLICISLLQLMVPVNT), serve as a signal peptide directing secretion. Cystine bridges form between cysteine 61–cysteine 114, cysteine 73–cysteine 113, cysteine 82–cysteine 99, cysteine 84–cysteine 101, and cysteine 88–cysteine 103.

The protein belongs to the resistin/FIZZ family. In terms of assembly, homodimer. Heterodimer with RETNLB. In terms of tissue distribution, expressed in colon, lung, spleen, pancreas, ileum and bone marrow (at protein level). In colon, found throughout the crypt and surface epithelium, including goblet cells (at protein level). Highest expression is observed in bone marrow, spleen and lung, with lower levels in other tissues. Detected at low levels in granulocytes, but not found in monocytes or lymphocytes. Has very weak expression in white adipose tissue.

The protein resides in the secreted. Functionally, probable hormone. Promotes chemotaxis in myeloid cells. The protein is Resistin-like gamma of Mus musculus (Mouse).